The following is a 194-amino-acid chain: Putative manganese efflux pump MntP (194 aa).

6 helical membrane passes run 3–23, 37–57, 69–89, 110–132, 147–167, and 172–192; these read PFSI…AAIG, LRAG…GWLL, DHWI…VAGL, LGLA…SLAF, CTFS…NLIG, and MLGG…HLSG.

It belongs to the MntP (TC 9.B.29) family.

Its subcellular location is the cell inner membrane. Probably functions as a manganese efflux pump. This Xanthomonas axonopodis pv. citri (strain 306) protein is Putative manganese efflux pump MntP.